The following is a 160-amino-acid chain: 2-C-methyl-D-erythritol 2,4-cyclodiphosphate synthase (160 aa).

The a divalent metal cation site is built by aspartate 10 and histidine 12. Residues 10 to 12 (DVH) and 36 to 37 (HS) contribute to the 4-CDP-2-C-methyl-D-erythritol 2-phosphate site. Histidine 44 is an a divalent metal cation binding site. Residues 58–60 (DIG), 63–67 (FPDTD), 102–108 (AQAPKML), 134–137 (TTTE), phenylalanine 141, and arginine 144 contribute to the 4-CDP-2-C-methyl-D-erythritol 2-phosphate site.

It belongs to the IspF family. Homotrimer. The cofactor is a divalent metal cation.

It carries out the reaction 4-CDP-2-C-methyl-D-erythritol 2-phosphate = 2-C-methyl-D-erythritol 2,4-cyclic diphosphate + CMP. The protein operates within isoprenoid biosynthesis; isopentenyl diphosphate biosynthesis via DXP pathway; isopentenyl diphosphate from 1-deoxy-D-xylulose 5-phosphate: step 4/6. Its function is as follows. Involved in the biosynthesis of isopentenyl diphosphate (IPP) and dimethylallyl diphosphate (DMAPP), two major building blocks of isoprenoid compounds. Catalyzes the conversion of 4-diphosphocytidyl-2-C-methyl-D-erythritol 2-phosphate (CDP-ME2P) to 2-C-methyl-D-erythritol 2,4-cyclodiphosphate (ME-CPP) with a corresponding release of cytidine 5-monophosphate (CMP). This Shewanella amazonensis (strain ATCC BAA-1098 / SB2B) protein is 2-C-methyl-D-erythritol 2,4-cyclodiphosphate synthase.